Reading from the N-terminus, the 160-residue chain is Probable NADH dehydrogenase [ubiquinone] 1 beta subcomplex subunit 2, mitochondrial (160 aa).

The protein belongs to the complex I NDUFB2 subunit family. In terms of assembly, complex I is composed of 45 different subunits.

It localises to the mitochondrion inner membrane. In terms of biological role, accessory subunit of the mitochondrial membrane respiratory chain NADH dehydrogenase (Complex I), that is believed not to be involved in catalysis. Complex I functions in the transfer of electrons from NADH to the respiratory chain. The immediate electron acceptor for the enzyme is believed to be ubiquinone. This Caenorhabditis briggsae protein is Probable NADH dehydrogenase [ubiquinone] 1 beta subcomplex subunit 2, mitochondrial.